The chain runs to 309 residues: SUR7 family protein FMP45 (309 aa).

Residues 1 to 5 (MIFKR) lie on the Cytoplasmic side of the membrane. Residues 6-26 (FVNLLVFLFLLGAGLLTFFLI) traverse the membrane as a helical segment. The Extracellular segment spans residues 27–116 (LSGGRESGTL…YYLSRVGWAM (90 aa)). Asn-73 carries N-linked (GlcNAc...) asparagine glycosylation. A helical membrane pass occupies residues 117–137 (LLISLFFIVLALVPGFLATFL). The Cytoplasmic portion of the chain corresponds to 138 to 140 (PFK). A helical transmembrane segment spans residues 141–161 (AVPVLYCVLSWLAFFFIILAA). The Extracellular portion of the chain corresponds to 162–188 (CLYTGCYVKARKTFRNSGRSARLGPKN). A helical transmembrane segment spans residues 189 to 209 (FAFIWTSVFLMLVNAIWSTIF). Topologically, residues 210-309 (SATHKAHSTY…GLAGPVTVRD (100 aa)) are cytoplasmic. Phosphoserine occurs at positions 230 and 232. At Thr-235 the chain carries Phosphothreonine. A disordered region spans residues 253–309 (GPITAAPVVGQPQPTTTTTPAGNGKFFQKLKTRKQVPSAELEPAGDGGLAGPVTVRD). The span at 258–274 (APVVGQPQPTTTTTPAG) shows a compositional bias: low complexity.

The protein belongs to the SUR7 family.

The protein resides in the cell membrane. Its function is as follows. Involved in sporulation and affects the sphingolipid composition of the plasma membrane. The polypeptide is SUR7 family protein FMP45 (FMP45) (Saccharomyces cerevisiae (strain ATCC 204508 / S288c) (Baker's yeast)).